A 148-amino-acid chain; its full sequence is Probable calcium-binding protein CML7 (148 aa).

EF-hand domains are found at residues 9–44 (EQVA…LGGN), 80–115 (PFDR…IGEK), and 116–148 (LEPH…IVAK). Ca(2+) contacts are provided by D22, D24, D26, R28, E33, D93, D95, S97, T99, and D104.

In terms of biological role, potential calcium sensor. The sequence is that of Probable calcium-binding protein CML7 (CML7) from Oryza sativa subsp. japonica (Rice).